The chain runs to 912 residues: Ubiquitin carboxyl-terminal hydrolase 3 (912 aa).

Residues 1–11 show a composition bias toward basic and acidic residues; the sequence is MNMQDANKEES. 4 disordered regions span residues 1 to 30, 68 to 176, 241 to 384, and 396 to 417; these read MNMQDANKEESYSMYPKTSSPPPPTPTNMQ, IYHQ…SYSS, NSSV…TTAG, and GKSSSPLLSKQPQKKDKKYVPP. Composition is skewed to low complexity over residues 82–95, 102–140, and 159–176; these read NNINGGSTTNNNNI, SNGITNNNGSSGNQGANSSGSGMSYNKSHTYHHNYSNNH, and TNSSNGNGSSATSPSYSS. Positions 249–259 are enriched in basic residues; it reads AHHHTKSHSIP. A compositionally biased stretch (basic and acidic residues) spans 260 to 310; it reads KHNEEVKTETHGEEEDAHDKKPHASKDAHELKKKTEVKKEDAKQDRNEKVI. Low complexity predominate over residues 335-355; it reads SKTSSPSPSPPAAKSWSAIAS. Composition is skewed to polar residues over residues 361-384 and 396-406; these read RQASNKTVSGSMVTKTPISGTTAG and GKSSSPLLSKQ. In terms of domain architecture, USP spans 460 to 911; it reads RGIINRANIC…TAYILMYQKR (452 aa). Catalysis depends on C469, which acts as the Nucleophile. H861 (proton acceptor) is an active-site residue.

The protein belongs to the peptidase C19 family. Heterotetramer with BRE5; contains two molecules of BRE5 and two molecules of UBP3. Forms a complex composed of CDC48, DOA1, deubiquitinase UBP3 and probably BRE5. Within the complex interacts directly with DOA1 and CDC48 in a BRE5-independent manner.

It carries out the reaction Thiol-dependent hydrolysis of ester, thioester, amide, peptide and isopeptide bonds formed by the C-terminal Gly of ubiquitin (a 76-residue protein attached to proteins as an intracellular targeting signal).. Functionally, has an ATP-independent isopeptidase activity, cleaving at the C-terminus of the ubiquitin moiety in natural or engineered linear fusion proteins, irrespective of their size or the presence of an N-terminal extension to ubiquitin. Plays a role in regulation of silencing by interacting with SIR4. Also, in conjunction with BRE5, cleaves ubiquitin, leading to the subsequent mono-ubiquitination of SEC23. Required for ribophagy, a process which relocalizes ribosomal particles into the vacuole for degradation in response to starvation. This is Ubiquitin carboxyl-terminal hydrolase 3 (UBP3) from Saccharomyces cerevisiae (strain ATCC 204508 / S288c) (Baker's yeast).